Here is a 68-residue protein sequence, read N- to C-terminus: UPF0434 protein BURPS668_0926 (68 aa).

It belongs to the UPF0434 family.

In Burkholderia pseudomallei (strain 668), this protein is UPF0434 protein BURPS668_0926.